A 406-amino-acid polypeptide reads, in one-letter code: Cysteine desulfurase (406 aa).

The residue at position 226 (lysine 226) is an N6-(pyridoxal phosphate)lysine. Residue cysteine 364 is the Cysteine persulfide intermediate of the active site.

The protein belongs to the class-V pyridoxal-phosphate-dependent aminotransferase family. Csd subfamily. As to quaternary structure, homodimer. Interacts with SufE and the SufBCD complex composed of SufB, SufC and SufD. The interaction with SufE is required to mediate the direct transfer of the sulfur atom from the S-sulfanylcysteine. It depends on pyridoxal 5'-phosphate as a cofactor.

It localises to the cytoplasm. The enzyme catalyses (sulfur carrier)-H + L-cysteine = (sulfur carrier)-SH + L-alanine. The catalysed reaction is L-selenocysteine + AH2 = hydrogenselenide + L-alanine + A + H(+). Its pathway is cofactor biosynthesis; iron-sulfur cluster biosynthesis. Cysteine desulfurases mobilize the sulfur from L-cysteine to yield L-alanine, an essential step in sulfur metabolism for biosynthesis of a variety of sulfur-containing biomolecules. Component of the suf operon, which is activated and required under specific conditions such as oxidative stress and iron limitation. Acts as a potent selenocysteine lyase in vitro, that mobilizes selenium from L-selenocysteine. Selenocysteine lyase activity is however unsure in vivo. The sequence is that of Cysteine desulfurase from Escherichia coli O157:H7 (strain EC4115 / EHEC).